The primary structure comprises 77 residues: Acyl carrier protein (77 aa).

Positions 1–76 constitute a Carrier domain; that stretch reads MATFDDVKAV…DVVNYIDNLK (76 aa). Position 36 is an O-(pantetheine 4'-phosphoryl)serine (Ser-36).

This sequence belongs to the acyl carrier protein (ACP) family. 4'-phosphopantetheine is transferred from CoA to a specific serine of apo-ACP by AcpS. This modification is essential for activity because fatty acids are bound in thioester linkage to the sulfhydryl of the prosthetic group.

It localises to the cytoplasm. It functions in the pathway lipid metabolism; fatty acid biosynthesis. In terms of biological role, carrier of the growing fatty acid chain in fatty acid biosynthesis. This Campylobacter jejuni subsp. doylei (strain ATCC BAA-1458 / RM4099 / 269.97) protein is Acyl carrier protein.